The primary structure comprises 373 residues: tRNA-specific 2-thiouridylase MnmA (373 aa).

ATP contacts are provided by residues 12 to 19 (GMSGGVDS) and Met-38. The tract at residues 98–100 (NPD) is interaction with target base in tRNA. The active-site Nucleophile is the Cys-103. Residues Cys-103 and Cys-200 are joined by a disulfide bond. Gly-127 contacts ATP. Residues 150–152 (KDQ) form an interaction with tRNA region. Cys-200 acts as the Cysteine persulfide intermediate in catalysis. Positions 312-313 (RY) are interaction with tRNA.

The protein belongs to the MnmA/TRMU family.

Its subcellular location is the cytoplasm. It carries out the reaction S-sulfanyl-L-cysteinyl-[protein] + uridine(34) in tRNA + AH2 + ATP = 2-thiouridine(34) in tRNA + L-cysteinyl-[protein] + A + AMP + diphosphate + H(+). In terms of biological role, catalyzes the 2-thiolation of uridine at the wobble position (U34) of tRNA, leading to the formation of s(2)U34. In Streptococcus agalactiae serotype III (strain NEM316), this protein is tRNA-specific 2-thiouridylase MnmA.